Here is a 197-residue protein sequence, read N- to C-terminus: MRGNQLSYEDPFASAPVDTAPAEEAQQQTPTESPWDPPAQQTQTVEVRPAPADALSITFKGDGSYSAPWLVPKYASVTEALVDLGVDPDEVAKLGQGQKWFALMDRVTKMADHFANLGGGSKPNSGGGGSGGGGQQHQSRAPQQAQEAPGGEERFCKHGKMEFKSGVSKAGNTYALFSCTAPRNEQCPAQYPSKKNG.

Disordered stretches follow at residues 1-49 and 114-157; these read MRGN…EVRP and FANL…RFCK. Positions 117-135 are enriched in gly residues; that stretch reads LGGGSKPNSGGGGSGGGGQ. Positions 136–146 are enriched in low complexity; that stretch reads QHQSRAPQQAQ.

This is Gene 49 protein (49) from Mycobacterium phage D29 (Mycobacteriophage D29).